A 1240-amino-acid chain; its full sequence is RNA-directed RNA polymerase VP2 (1240 aa).

In terms of domain architecture, RdRp catalytic spans 516–764; the sequence is LVANYINKHM…KLYALFGARI (249 aa).

Belongs to the reoviridae RNA-directed RNA polymerase family.

It is found in the virion. It carries out the reaction RNA(n) + a ribonucleoside 5'-triphosphate = RNA(n+1) + diphosphate. In terms of biological role, RNA-directed RNA polymerase that is involved in transcription and genome replication. Following infection, it catalyzes the synthesis of fully conservative plus strands. After core assembly, which consists in recruitment of one capped plus-strand for each genomic segments and polymerase complexes, the polymerase switches mode and catalyzes the synthesis of complementary minus-strands. In Oncorhynchus keta (Chum salmon), this protein is RNA-directed RNA polymerase VP2 (S2).